The following is a 118-amino-acid chain: Protein TusC (118 aa).

This sequence belongs to the DsrF/TusC family. As to quaternary structure, heterohexamer, formed by a dimer of trimers. The hexameric TusBCD complex contains 2 copies each of TusB, TusC and TusD. The TusBCD complex interacts with TusE.

It localises to the cytoplasm. Part of a sulfur-relay system required for 2-thiolation of 5-methylaminomethyl-2-thiouridine (mnm(5)s(2)U) at tRNA wobble positions. This chain is Protein TusC, found in Salmonella arizonae (strain ATCC BAA-731 / CDC346-86 / RSK2980).